Consider the following 257-residue polypeptide: Glutamate racemase (257 aa).

Residues 12–13 (DS) and 44–45 (YG) each bind substrate. Cys75 serves as the catalytic Proton donor/acceptor. 76–77 (NT) is a binding site for substrate. The active-site Proton donor/acceptor is Cys176. A substrate-binding site is contributed by 177–178 (TH).

This sequence belongs to the aspartate/glutamate racemases family.

The catalysed reaction is L-glutamate = D-glutamate. It participates in cell wall biogenesis; peptidoglycan biosynthesis. Functionally, provides the (R)-glutamate required for cell wall biosynthesis. This Thermus thermophilus (strain ATCC 27634 / DSM 579 / HB8) protein is Glutamate racemase.